The primary structure comprises 238 residues: Tetraspanin-4 (238 aa).

Residues 1–13 (MARGCLQGVKYLM) lie on the Cytoplasmic side of the membrane. A helical membrane pass occupies residues 14–34 (FAFNLLFWLGGCGVLGVGIWL). The Extracellular segment spans residues 35-55 (AATQGNFATLSSSFPSLSAAN). A helical transmembrane segment spans residues 56–76 (LLIVTGTFVMAIGFVGCIGAL). Topologically, residues 77 to 85 (KENKCLLLT) are cytoplasmic. Residues 86 to 106 (FFVLLLLVFLLEATIAVLFFA) form a helical membrane-spanning segment. The Extracellular portion of the chain corresponds to 107–201 (YSDKIDSYAQ…ETVKAWLQEN (95 aa)). N-linked (GlcNAc...) asparagine glycosylation is found at N152 and N161. A helical transmembrane segment spans residues 202-222 (LLAVGIFGLCTALVQILGLTF). The Cytoplasmic portion of the chain corresponds to 223 to 238 (AMTMYCQVVKADTYCA).

Belongs to the tetraspanin (TM4SF) family. Forms a complex with integrins.

The protein localises to the membrane. The polypeptide is Tetraspanin-4 (Tspan4) (Mus musculus (Mouse)).